Reading from the N-terminus, the 347-residue chain is tRNA N6-adenosine threonylcarbamoyltransferase (347 aa).

Fe cation contacts are provided by His-113 and His-117. Residues Ile-136 to Gly-140, Asp-170, Gly-183, Asp-187, and Asn-282 each bind substrate. Residue Asp-310 coordinates Fe cation.

It belongs to the KAE1 / TsaD family. Fe(2+) serves as cofactor.

It localises to the cytoplasm. The catalysed reaction is L-threonylcarbamoyladenylate + adenosine(37) in tRNA = N(6)-L-threonylcarbamoyladenosine(37) in tRNA + AMP + H(+). Required for the formation of a threonylcarbamoyl group on adenosine at position 37 (t(6)A37) in tRNAs that read codons beginning with adenine. Is involved in the transfer of the threonylcarbamoyl moiety of threonylcarbamoyl-AMP (TC-AMP) to the N6 group of A37, together with TsaE and TsaB. TsaD likely plays a direct catalytic role in this reaction. In Bifidobacterium adolescentis (strain ATCC 15703 / DSM 20083 / NCTC 11814 / E194a), this protein is tRNA N6-adenosine threonylcarbamoyltransferase.